The following is a 72-amino-acid chain: Translation initiation factor IF-1 (72 aa).

Residues 1 to 72 (MTKEEVLEFP…TKGRITYRFK (72 aa)) form the S1-like domain.

The protein belongs to the IF-1 family. As to quaternary structure, component of the 30S ribosomal translation pre-initiation complex which assembles on the 30S ribosome in the order IF-2 and IF-3, IF-1 and N-formylmethionyl-tRNA(fMet); mRNA recruitment can occur at any time during PIC assembly.

Its subcellular location is the cytoplasm. Functionally, one of the essential components for the initiation of protein synthesis. Stabilizes the binding of IF-2 and IF-3 on the 30S subunit to which N-formylmethionyl-tRNA(fMet) subsequently binds. Helps modulate mRNA selection, yielding the 30S pre-initiation complex (PIC). Upon addition of the 50S ribosomal subunit IF-1, IF-2 and IF-3 are released leaving the mature 70S translation initiation complex. In Agrobacterium fabrum (strain C58 / ATCC 33970) (Agrobacterium tumefaciens (strain C58)), this protein is Translation initiation factor IF-1.